Consider the following 506-residue polypeptide: Anaerobic nitric oxide reductase transcription regulator NorR (506 aa).

4-aspartylphosphate is present on aspartate 57. The region spanning 187–416 is the Sigma-54 factor interaction domain; the sequence is MIGLSPAMTQ…LEHAIHRAVV (230 aa). Residues 215–222 and 278–287 contribute to the ATP site; these read GETGTGKE and ADNGTLFLDE. Residues 481–500 constitute a DNA-binding region (H-T-H motif); that stretch reads WAASARALETDVANLHRLAK.

The protein operates within nitrogen metabolism; nitric oxide reduction. Its function is as follows. Required for the expression of anaerobic nitric oxide (NO) reductase, acts as a transcriptional activator for at least the norVW operon. Activation also requires sigma-54. This is Anaerobic nitric oxide reductase transcription regulator NorR from Salmonella agona (strain SL483).